A 141-amino-acid chain; its full sequence is Hemoglobin subunit alpha-1 (141 aa).

Residues 1 to 141 enclose the Globin domain; the sequence is VLTDAEKKEV…VATVLTSKYR (141 aa). Histidine 58 serves as a coordination point for O2. Histidine 87 is a binding site for heme b.

The protein belongs to the globin family. In terms of assembly, heterotetramer of two alpha chains and two beta chains. Red blood cells.

Involved in oxygen transport from the lung to the various peripheral tissues. This is Hemoglobin subunit alpha-1 from Tachyglossus aculeatus aculeatus (Southeast Australian short-beaked echidna).